The chain runs to 320 residues: ATP-dependent 6-phosphofructokinase (320 aa).

Gly-12 contributes to the ATP binding site. 22 to 26 (RGVVR) contacts ADP. ATP contacts are provided by residues 73–74 (RF) and 103–106 (GDGS). Residue Asp-104 coordinates Mg(2+). Substrate is bound at residue 126-128 (TID). Asp-128 (proton acceptor) is an active-site residue. Arg-155 contacts ADP. Residues Arg-163 and 170-172 (MGR) contribute to the substrate site. ADP is bound by residues 186–188 (GCE), Lys-212, and 214–216 (KKH). Substrate contacts are provided by residues Glu-223, Arg-244, and 250 to 253 (HIQR).

Belongs to the phosphofructokinase type A (PFKA) family. ATP-dependent PFK group I subfamily. Prokaryotic clade 'B1' sub-subfamily. Homotetramer. Requires Mg(2+) as cofactor.

The protein localises to the cytoplasm. It carries out the reaction beta-D-fructose 6-phosphate + ATP = beta-D-fructose 1,6-bisphosphate + ADP + H(+). The protein operates within carbohydrate degradation; glycolysis; D-glyceraldehyde 3-phosphate and glycerone phosphate from D-glucose: step 3/4. With respect to regulation, allosterically activated by ADP and other diphosphonucleosides, and allosterically inhibited by phosphoenolpyruvate. Functionally, catalyzes the phosphorylation of D-fructose 6-phosphate to fructose 1,6-bisphosphate by ATP, the first committing step of glycolysis. This chain is ATP-dependent 6-phosphofructokinase, found in Vibrio parahaemolyticus serotype O3:K6 (strain RIMD 2210633).